Here is a 1102-residue protein sequence, read N- to C-terminus: Endocytosis protein end4 (1102 aa).

The 131-residue stretch at 9–139 (DHMQSDASLM…SFHAQHPEFN (131 aa)) folds into the ENTH domain. Positions 265-334 (PHDPPDLEGD…SEPEPIQDFW (70 aa)) are disordered. Positions 292–305 (TGASTIAPQPTGTS) are enriched in polar residues. Positions 338–661 (TLDQQLAAQQ…ESLLQLSKLQ (324 aa)) form a coiled coil. Positions 858–1100 (LLNAPGENIE…DMRKTSYHVA (243 aa)) constitute an I/LWEQ domain.

The protein belongs to the SLA2 family.

The protein localises to the cytoplasm. It is found in the cytoskeleton. Functionally, required for cellular morphogenesis and polarization of the cortical cytoskeleton. Required for establishment of new polarized growth zones where it acts in actin organization. Involved plasma membrane internalization and is essential for fluid-phase endocytosis. The protein is Endocytosis protein end4 (end4) of Schizosaccharomyces pombe (strain 972 / ATCC 24843) (Fission yeast).